The following is a 1358-amino-acid chain: Indole-3-acetaldehyde oxidase (1358 aa).

One can recognise a 2Fe-2S ferredoxin-type domain in the interval 11–98 (STVVLAVNGK…RCSVTTSEGI (88 aa)). Residues cysteine 50, cysteine 55, and cysteine 58 each coordinate [2Fe-2S] cluster. The FAD-binding PCMH-type domain maps to 241–419 (IAASGDGWYH…LSIFIPEWGS (179 aa)). Residues 532–559 (SSAPSNIDTPNGSYTHETGSNVDSPERH) form a disordered region. Residues 537 to 554 (NIDTPNGSYTHETGSNVD) are compositionally biased toward polar residues.

Belongs to the xanthine dehydrogenase family. In terms of assembly, aldehyde oxidases (AO) are homodimers and heterodimers of AO subunits. The cofactor is [2Fe-2S] cluster. It depends on FAD as a cofactor. Mo-molybdopterin is required as a cofactor. Mostly expressed in roots, and, to a lower extent, in mesocotyl, leaves and coleoptile. Accumulates in apical region of maize coleoptiles (at protein level).

It localises to the cytoplasm. The enzyme catalyses indole-3-acetaldehyde + O2 + H2O = (indol-3-yl)acetate + H2O2 + H(+). Inhibited by 2-mercaptoethanol, p-chloromercuribenzoate, and iodoacetate. Functionally, in higher plants aldehyde oxidases (AO) appear to be homo- and heterodimeric assemblies of AO subunits with probably different physiological functions. Involved in the biosynthesis of auxin from (indol-3-yl)acetaldehyde. Can also use indole-3-aldehyde and benzaldehyde as substrate. In Zea mays (Maize), this protein is Indole-3-acetaldehyde oxidase (AO1).